We begin with the raw amino-acid sequence, 232 residues long: Large ribosomal subunit protein uL1 (232 aa).

This sequence belongs to the universal ribosomal protein uL1 family. As to quaternary structure, part of the 50S ribosomal subunit.

In terms of biological role, binds directly to 23S rRNA. The L1 stalk is quite mobile in the ribosome, and is involved in E site tRNA release. Its function is as follows. Protein L1 is also a translational repressor protein, it controls the translation of the L11 operon by binding to its mRNA. This Chlamydia abortus (strain DSM 27085 / S26/3) (Chlamydophila abortus) protein is Large ribosomal subunit protein uL1.